A 351-amino-acid polypeptide reads, in one-letter code: Anthranilate phosphoribosyltransferase (351 aa).

5-phospho-alpha-D-ribose 1-diphosphate contacts are provided by residues G80, 83 to 84 (GD), T88, 90 to 93 (NIST), 108 to 116 (KHGNRSVTS), and S120. G80 contributes to the anthranilate binding site. Position 92 (S92) interacts with Mg(2+). N111 contacts anthranilate. R166 is an anthranilate binding site. 2 residues coordinate Mg(2+): D229 and E230.

The protein belongs to the anthranilate phosphoribosyltransferase family. As to quaternary structure, homodimer. It depends on Mg(2+) as a cofactor.

It carries out the reaction N-(5-phospho-beta-D-ribosyl)anthranilate + diphosphate = 5-phospho-alpha-D-ribose 1-diphosphate + anthranilate. Its pathway is amino-acid biosynthesis; L-tryptophan biosynthesis; L-tryptophan from chorismate: step 2/5. Catalyzes the transfer of the phosphoribosyl group of 5-phosphorylribose-1-pyrophosphate (PRPP) to anthranilate to yield N-(5'-phosphoribosyl)-anthranilate (PRA). This is Anthranilate phosphoribosyltransferase from Chlorobium chlorochromatii (strain CaD3).